A 91-amino-acid polypeptide reads, in one-letter code: Small ribosomal subunit protein uS15 (91 aa).

It belongs to the universal ribosomal protein uS15 family. Part of the 30S ribosomal subunit. Forms a bridge to the 50S subunit in the 70S ribosome, contacting the 23S rRNA.

One of the primary rRNA binding proteins, it binds directly to 16S rRNA where it helps nucleate assembly of the platform of the 30S subunit by binding and bridging several RNA helices of the 16S rRNA. In terms of biological role, forms an intersubunit bridge (bridge B4) with the 23S rRNA of the 50S subunit in the ribosome. This chain is Small ribosomal subunit protein uS15, found in Deinococcus radiodurans (strain ATCC 13939 / DSM 20539 / JCM 16871 / CCUG 27074 / LMG 4051 / NBRC 15346 / NCIMB 9279 / VKM B-1422 / R1).